The primary structure comprises 133 residues: uncharacterized protein (133 aa).

This is an uncharacterized protein from Escherichia coli O157:H7.